We begin with the raw amino-acid sequence, 24 residues long: Alpha-lactalbumin (24 aa).

The protein belongs to the glycosyl hydrolase 22 family. In terms of assembly, lactose synthase (LS) is a heterodimer of a catalytic component, beta1,4-galactosyltransferase (beta4Gal-T1) and a regulatory component, alpha-lactalbumin (LA). In terms of processing, glycosylated (50% of the proteins). Mammary gland specific. Secreted in milk.

It is found in the secreted. Its function is as follows. Regulatory subunit of lactose synthase, changes the substrate specificity of galactosyltransferase in the mammary gland making glucose a good acceptor substrate for this enzyme. This enables LS to synthesize lactose, the major carbohydrate component of milk. In other tissues, galactosyltransferase transfers galactose onto the N-acetylglucosamine of the oligosaccharide chains in glycoproteins. This chain is Alpha-lactalbumin (LALBA), found in Felis catus (Cat).